We begin with the raw amino-acid sequence, 314 residues long: Serine protease 46 (314 aa).

Residues valine 44–glycine 281 form the Peptidase S1 domain. A disulfide bridge connects residues cysteine 69 and cysteine 85. Catalysis depends on charge relay system residues histidine 84 and aspartate 130. 3 disulfide bridges follow: cysteine 164-cysteine 239, cysteine 197-cysteine 219, and cysteine 229-cysteine 257. Serine 233 functions as the Charge relay system in the catalytic mechanism. Residues phenylalanine 293–leucine 313 traverse the membrane as a helical segment.

It belongs to the peptidase S1 family.

It is found in the membrane. The protein is Serine protease 46 (Prss46) of Mus musculus (Mouse).